The chain runs to 1417 residues: Cytoadherence-linked asexual protein 3.1 (1417 aa).

The first 24 residues, 1 to 24, serve as a signal peptide directing secretion; sequence MVSFFKTPIFILIIFLYLNEKVIC. Cystine bridges form between Cys333–Cys361, Cys407–Cys413, Cys517–Cys545, and Cys521–Cys542. The helical transmembrane segment at 1204–1224 threads the bilayer; it reads LVNGFMYAFCFFAISQMYAYF. The tract at residues 1383–1417 is disordered; it reads TYIDTEKMNEADSADSDDEKDSDTPDDELMISRFH. Over residues 1394-1411 the composition is skewed to acidic residues; it reads DSADSDDEKDSDTPDDEL.

Self-associates. Component of the RhopH complex. RhopH complex is at least composed of CLAG3.1/CLAG3.2, RhopH2 and RhopH3 with a 1:1:1 subunit stoichiometry. CLAG3.1/CLAG3.2 mediates subunit association through independent contacts with RhopH2 and RhopH3, which do not directly interact with one another. Interacts with RhopH2. Interacts with RhopH3.

It is found in the host cell membrane. Its subcellular location is the host cytoplasm. It localises to the cytoplasmic vesicle. The protein localises to the secretory vesicle. The protein resides in the rhoptry. Its function is as follows. Participates in the formation of new permeability pathways in Plasmodium-infected erythrocytes enabling the uptake of nutrients from the blood plasma. In Plasmodium falciparum (isolate 3D7), this protein is Cytoadherence-linked asexual protein 3.1.